Consider the following 673-residue polypeptide: MVAEKPKAAAKIAYALSDGRGVLRCSEYGVPYWIVRRDGAAIVVAPSAGHLFGPHTDSRGFPVFDFEWRPIFEFDRGAGYLSKFYRMLSRILPGASLYVNACDYDIEGSVIGFKIIEAFGDVNRARRMKFSTLAPQDIRRAYARMERLDVEMIEAGMARSEMDWLWGINVSRALMEAARRAAGRRVILSAGRVQSPTLVEAYRRWREINLHVPKASVAVKITAEKGGGVFDARPHGWKPQSLETARSIKSELRKNPWLAVEEVRSERSILRPPPAFNLGDLQKEANRILGLPPLRTQSIAEELYLEALISYPRTNSQKLPPSINYRAILDKLAHGPLGREARELLKETGGVLRPVQGSKDDPAHPAIHPTGEKPSQRLSKEHMAVYELIVRRFLAAFSREAIVSKSSVLLRDFQGRVWRAEGLRVEDLGWLKYYHYSTPGEKPMPPLDRGDKARVVRVDVRVEWSQTPVRLDKASLLRWMESVNIGTEGTRARIIETLYKRGYLEGSRKSEVTPLGEAVAVIIQTLFPELSKPDLTRRFESMIEDIRSGRRTRQEVIDMSKKTISKLLESFLDRLDTAVREIGVSLGSVEVEAACHLCGRKAVSAVSGYRLCSHHMEAFDRLRKALPNLASTISSTPREALEAIARGRSRAGAWVRDVAALALRDDGLYKALL.

A Toprim domain is found at 1–134 (MVAEKPKAAA…ARRMKFSTLA (134 aa)). Mg(2+) is bound by residues Glu-4 and Asp-103. Residues 149–568 (DVEMIEAGMA…MSKKTISKLL (420 aa)) form the Topo IA-type catalytic domain. Residues 189–194 (SAGRVQ) form an interaction with DNA region. The active-site O-(5'-phospho-DNA)-tyrosine intermediate is the Tyr-311. A disordered region spans residues 352–374 (LRPVQGSKDDPAHPAIHPTGEKP). Residues 595–615 (CHLCGRKAVSAVSGYRLCSHH) form a C4-type zinc finger.

It belongs to the type IA topoisomerase family. Monomer. Mg(2+) is required as a cofactor.

It catalyses the reaction ATP-independent breakage of single-stranded DNA, followed by passage and rejoining.. Its function is as follows. Releases the supercoiling and torsional tension of DNA, which is introduced during the DNA replication and transcription, by transiently cleaving and rejoining one strand of the DNA duplex. Introduces a single-strand break via transesterification at a target site in duplex DNA. The scissile phosphodiester is attacked by the catalytic tyrosine of the enzyme, resulting in the formation of a DNA-(5'-phosphotyrosyl)-enzyme intermediate and the expulsion of a 3'-OH DNA strand. The free DNA strand then undergoes passage around the unbroken strand, thus removing DNA supercoils. Finally, in the religation step, the DNA 3'-OH attacks the covalent intermediate to expel the active-site tyrosine and restore the DNA phosphodiester backbone. This Aeropyrum pernix (strain ATCC 700893 / DSM 11879 / JCM 9820 / NBRC 100138 / K1) protein is DNA topoisomerase 1.